The chain runs to 343 residues: Phosphoribosylformylglycinamidine cyclo-ligase (343 aa).

Belongs to the AIR synthase family.

The protein localises to the cytoplasm. It catalyses the reaction 2-formamido-N(1)-(5-O-phospho-beta-D-ribosyl)acetamidine + ATP = 5-amino-1-(5-phospho-beta-D-ribosyl)imidazole + ADP + phosphate + H(+). The protein operates within purine metabolism; IMP biosynthesis via de novo pathway; 5-amino-1-(5-phospho-D-ribosyl)imidazole from N(2)-formyl-N(1)-(5-phospho-D-ribosyl)glycinamide: step 2/2. The sequence is that of Phosphoribosylformylglycinamidine cyclo-ligase from Staphylococcus epidermidis (strain ATCC 35984 / DSM 28319 / BCRC 17069 / CCUG 31568 / BM 3577 / RP62A).